Here is a 103-residue protein sequence, read N- to C-terminus: Conantokin R1-A (103 aa).

Residues 1–21 form the signal peptide; it reads MQLYTYLYLLVPLVTFHLILG. The propeptide occupies 22–79; it reads TGTLDHGGALTERRSTDATALKPEPVLQKSAARSTDDNGKDRLTQMKRILKKRGNNPR. The segment at 34 to 83 is disordered; that stretch reads RRSTDATALKPEPVLQKSAARSTDDNGKDRLTQMKRILKKRGNNPRADEE. Positions 55–65 are enriched in basic and acidic residues; that stretch reads STDDNGKDRLT. E82, E83, and E89 each carry 4-carboxyglutamate.

It belongs to the conotoxin B superfamily. Requires Ca(2+) as cofactor. It depends on Mg(2+) as a cofactor. Expressed by the venom duct.

The protein localises to the secreted. Its function is as follows. Conantokins inhibit N-methyl-D-aspartate (NMDA) receptors. This toxin has the highest potency for the NR2B/GRIN2B subunit (IC(50)=0.11 uM), followed by NR2D/GRIN2D (IC(50)=0.48 uM), NR2A/GRIN2A (IC(50)=2.1 uM), and NR2C/GRIN2C (IC(50)=6.1 uM) subunits when tested on rat receptors. This is Conantokin R1-A from Conus rolani (Cone snail).